The sequence spans 256 residues: Small ribosomal subunit protein eS1 (256 aa).

The segment covering M1 to K18 has biased composition (basic residues). Positions M1–A20 are disordered. Residue A2 is modified to N-acetylalanine; partial.

This sequence belongs to the eukaryotic ribosomal protein eS1 family. As to quaternary structure, component of the small ribosomal subunit. Mature ribosomes consist of a small (40S) and a large (60S) subunit. The 40S subunit contains about 33 different proteins and 1 molecule of RNA (18S). The 60S subunit contains about 49 different proteins and 3 molecules of RNA (25S, 5.8S and 5S).

It is found in the cytoplasm. This chain is Small ribosomal subunit protein eS1, found in Podospora anserina (strain S / ATCC MYA-4624 / DSM 980 / FGSC 10383) (Pleurage anserina).